Reading from the N-terminus, the 839-residue chain is Taste receptor type 1 member 2 (839 aa).

The N-terminal stretch at 1-19 (MRPRATTICSLFFLLRVLA) is a signal peptide. Residues 20-566 (EPAKNSDFYL…AFLEWHEAPT (547 aa)) lie on the Extracellular side of the membrane. Residues N84, N127, N248, N292, N312, N368, N428, N487, and N527 are each glycosylated (N-linked (GlcNAc...) asparagine). The chain crosses the membrane as a helical span at residues 567-587 (IVVALLAALGFLSTLAILVIF). At 588–602 (WRHFQTPMVRSAGGP) the chain is on the cytoplasmic side. A helical membrane pass occupies residues 603 to 623 (MCFLMLTLLLVAYMVVPVYVG). Over 624–635 (PPKVSTCFCRQA) the chain is Extracellular. The chain crosses the membrane as a helical span at residues 636–656 (LFPLCFTICISCIAVRSFQIV). Topologically, residues 657–681 (CVFKMASRFPRAYSYWVRYQGPYVS) are cytoplasmic. The helical transmembrane segment at 682-702 (MAFITVLKMVTVVIGMLATGL) threads the bilayer. Topologically, residues 703–727 (NPTTRIDPDDPKIMIVSCNPNYRNS) are extracellular. Residues 728–748 (LFFNTGLDLLLSVVGFSFAYM) traverse the membrane as a helical segment. The Cytoplasmic segment spans residues 749 to 760 (GKELPTNYNEAK). The chain crosses the membrane as a helical span at residues 761–781 (FITLSMTFYFTSSVSLCTFMS). Over 782-784 (AYN) the chain is Extracellular. Residues 785–805 (GVLVTIMDLLVTVLNLLAISL) traverse the membrane as a helical segment. Residues 806–839 (GYFGPKCYMILFYPERNTPAYFNSMIQGYTMRRD) are Cytoplasmic-facing.

This sequence belongs to the G-protein coupled receptor 3 family. TAS1R subfamily. Forms heterodimers with TAS1R3.

The protein localises to the cell membrane. Its function is as follows. Putative taste receptor. TAS1R2/TAS1R3 recognizes diverse natural and synthetic sweeteners. This is Taste receptor type 1 member 2 (TAS1R2) from Papio hamadryas (Hamadryas baboon).